The sequence spans 546 residues: MGRTRVVIWFRNDLRLLDNACVARAATLASESSDVEVVPVYVFDETYFKPSKRGLARFGAGRGKFTLECVGDLKTSLRALGSDLLVRCGKSRDVIAELTLTGANDRTIILTQTEVTSEETEMDVAVERATRERARGGAASATMERHWGSTLYHIDDVPFDVTSGLSDLPDVFTPFRNKVESKCKVRDVIPAPTANELGHVPASVEGFEWMPKPSDLPFASSEIAMDCDKRIKDCLDERSVLDFKGGESNALARVKYYLWESDRLATYFETRNGMLGGDYSTKLAPWLALGCVSPRHVVSEIRRYESERVENKSTYWVIFELIWRDFFKFFALKHGNKIFHLDGTAGRRASWKRDEKILKAWKTGTTGYPLIDANMRELAATGFMSNRGRQNVASWLALDAGIDWRHGADWFEHHLLDYDTASNWGNWCAAAGMTGGRINRFNIAKQTKDYDPAGEYIKTWVKELAEVPAAYIADPNQAPRELRDRIGLNYPNKLALPRRDFTEMGSPPGPRRGGGGGGRGRGRPGGSTPNRGTKARVASVYDTVYG.

The Photolyase/cryptochrome alpha/beta domain occupies 4-151 (TRVVIWFRND…TMERHWGSTL (148 aa)). A disordered region spans residues 497–546 (PRRDFTEMGSPPGPRRGGGGGGRGRGRPGGSTPNRGTKARVASVYDTVYG). A compositionally biased stretch (gly residues) spans 511-525 (RRGGGGGGRGRGRPG).

This sequence belongs to the DNA photolyase class-1 family. FAD serves as cofactor. (6R)-5,10-methylene-5,6,7,8-tetrahydrofolate is required as a cofactor.

Its subcellular location is the plastid. It localises to the chloroplast. The protein localises to the mitochondrion. May have a photoreceptor function. Binds ss- and ds-DNA in a sequence non-specific manner, lacks photolyase activity. This is Cryptochrome DASH, chloroplastic/mitochondrial from Ostreococcus tauri.